The sequence spans 155 residues: Transcription antitermination protein NusB (155 aa).

It belongs to the NusB family.

Functionally, involved in transcription antitermination. Required for transcription of ribosomal RNA (rRNA) genes. Binds specifically to the boxA antiterminator sequence of the ribosomal RNA (rrn) operons. The protein is Transcription antitermination protein NusB of Vibrio vulnificus (strain CMCP6).